Reading from the N-terminus, the 1363-residue chain is Collagen alpha-2(I) chain (1363 aa).

An N-terminal signal peptide occupies residues 1–22 (MLSFVDTRILLLLAVTSYLATS). Gln23 bears the Pyrrolidone carboxylic acid mark. The propeptide at 23–77 (QHLFQASAGRKGPRGDKGPQGERGPPGPPGRDGEDGPPGPPGPPGPPGLGGNFAA) is N-terminal propeptide. The interval 28–1110 (ASAGRKGPRG…GPNGGGYEVG (1083 aa)) is disordered. Over residues 59-69 (PPGPPGPPGPP) the composition is skewed to pro residues. Residue Gln78 is modified to Pyrrolidone carboxylic acid. Lys83 carries the post-translational modification Allysine. Low complexity predominate over residues 88 to 97 (GPGPMGLMGP). A compositionally biased stretch (pro residues) spans 98 to 110 (RGPPGASGPPGPP). Positions 112–128 (FQGVPGEPGEPGQTGPQ) are enriched in low complexity. The span at 140–154 (AGEDGHPGKPGRPGE) shows a compositional bias: basic and acidic residues. Lys176 bears the 5-hydroxylysine; alternate mark. Lys176 is a glycosylation site (O-linked (Gal...) hydroxylysine; alternate). Low complexity-rich tracts occupy residues 224–263 (IGAP…PGAK) and 299–320 (PGAN…AGAP). The segment covering 322–335 (LPGPRGIPGPPGPA) has biased composition (pro residues). A 4-hydroxyproline mark is found at Pro440 and Pro443. Composition is skewed to low complexity over residues 601–610 (PAGPIGSRGP) and 674–683 (RGLPGAIGAP). A compositionally biased stretch (gly residues) spans 684–699 (GPAGGAGDRGEGGPAG). The span at 721-736 (PSGFAGPPGAAGQPGA) shows a compositional bias: low complexity. Positions 737–746 (KGERGPKGPK) are enriched in basic and acidic residues. Composition is skewed to low complexity over residues 748–794 (ETGP…AGRV), 842–875 (AGEK…LGLP), 898–931 (VSGP…NPGN), 955–965 (PSGALGAPGPH), and 986–995 (VGPAGAFGPR). A compositionally biased stretch (basic and acidic residues) spans 1004–1015 (RGEKGEPGDKGH). Positions 1036 to 1049 (QHGDQGPPGNNGPA) are enriched in low complexity. Pro residues-rich tracts occupy residues 1051-1060 (PRGPPGPSGP) and 1088-1102 (AGPP…PPGP). The propeptide at 1118-1363 (ADQPSLRPKD…GLHIGPVCFK (246 aa)) is C-terminal propeptide. The region spanning 1128 to 1363 (YEVDATLKTL…GLHIGPVCFK (236 aa)) is the Fibrillar collagen NC1 domain. Cystine bridges form between Cys1158-Cys1190, Cys1198-Cys1361, and Cys1269-Cys1314. Ca(2+) is bound by residues Asp1176, Asn1178, Gln1179, Cys1181, and Asp1184. Asn1264 carries N-linked (GlcNAc...) asparagine glycosylation.

The protein belongs to the fibrillar collagen family. As to quaternary structure, trimers of one alpha 2(I) and two alpha 1(I) chains. In terms of processing, prolines at the third position of the tripeptide repeating unit (G-X-Y) are hydroxylated in some or all of the chains. The N-terminus of the mature protein is blocked. As to expression, forms the fibrils of tendon, ligaments and bones. In bones the fibrils are mineralized with calcium hydroxyapatite.

It is found in the secreted. It localises to the extracellular space. The protein localises to the extracellular matrix. Type I collagen is a member of group I collagen (fibrillar forming collagen). The chain is Collagen alpha-2(I) chain (COL1A2) from Gallus gallus (Chicken).